A 701-amino-acid polypeptide reads, in one-letter code: Vacuolar protein sorting-associated protein 52 B (701 aa).

Coiled-coil stretches lie at residues 23–45 (FEEDSRSEDISLEGLQQELEECE) and 511–533 (QLDINLERLRMAVDSLILKLAKL).

It belongs to the VPS52 family. Component of the Golgi-associated retrograde protein (GARP) complex. As to expression, detected in pollen.

It is found in the golgi apparatus. The protein resides in the trans-Golgi network membrane. The protein localises to the endosome membrane. Its subcellular location is the golgi apparatus membrane. In terms of biological role, may be involved in retrograde transport of early and late endosomes to the late Golgi. This is Vacuolar protein sorting-associated protein 52 B (P2) from Arabidopsis thaliana (Mouse-ear cress).